The chain runs to 278 residues: Para-Rep C1 (278 aa).

Residues 1-95 (MACSNWVFTR…VAGPWSYGDL (95 aa)) form the CRESS-DNA virus Rep endonuclease domain. The short motif at 8–11 (FTRN) is the RCR-1 element. 2 residues coordinate a divalent metal cation: Glu33 and His39. Positions 39-41 (HIQ) match the RCR-2 motif. The short motif at 48 to 69 (KKARFSTVKEIIGGNPHVEKMK) is the Nuclear localization signal element. Residue Tyr78 is the For DNA cleavage activity of the active site. An RCR-3 motif is present at residues 78–81 (YVQK). Position 83 (Glu83) interacts with a divalent metal cation. Positions 95 to 101 (LLKRGSH) match the Nuclear localization signal motif. 176–178 (GKS) provides a ligand contact to ATP.

It belongs to the nanoviridea/circoviridae replication-associated protein family. As to quaternary structure, homooligomer (Potential). Rep binds to repeated DNA motifs (iterons). It depends on Mg(2+) as a cofactor. Mn(2+) is required as a cofactor.

Its subcellular location is the host nucleus. The catalysed reaction is ATP + H2O = ADP + phosphate + H(+). Its function is as follows. Initiates and terminates the replication only of its own subviral DNA molecule. The closed circular ssDNA genome is first converted to a superhelical dsDNA. Rep binds a specific hairpin at the genome origin of replication. Introduces an endonucleolytic nick within the intergenic region of the genome, thereby initiating the rolling circle replication (RCR). Following cleavage, binds covalently to the 5'-phosphate of DNA as a tyrosyl ester. The cleavage gives rise to a free 3'-OH that serves as a primer for the cellular DNA polymerase. The polymerase synthesizes the (+) strand DNA by rolling circle mechanism. After one round of replication, a Rep-catalyzed nucleotidyl transfer reaction releases a circular single-stranded virus genome, thereby terminating the replication. Displays origin-specific DNA cleavage, nucleotidyl transferase, ATPase and helicase activities. The chain is Para-Rep C1 (C1) from Faba bean necrotic yellows C1 alphasatellite (FBNYC1A).